A 372-amino-acid polypeptide reads, in one-letter code: Lipoyl synthase, mitochondrial (372 aa).

The transit peptide at 1-27 directs the protein to the mitochondrion; it reads MSLRCGDAARTLGPRVFGRYFCSPVRP. [4Fe-4S] cluster is bound by residues cysteine 106, cysteine 111, cysteine 117, cysteine 137, cysteine 141, cysteine 144, and serine 352. Positions 122–341 constitute a Radical SAM core domain; the sequence is EYATATATIM…EKVGNELGFH (220 aa).

This sequence belongs to the radical SAM superfamily. Lipoyl synthase family. Requires [4Fe-4S] cluster as cofactor.

The protein resides in the mitochondrion. It carries out the reaction [[Fe-S] cluster scaffold protein carrying a second [4Fe-4S](2+) cluster] + N(6)-octanoyl-L-lysyl-[protein] + 2 oxidized [2Fe-2S]-[ferredoxin] + 2 S-adenosyl-L-methionine + 4 H(+) = [[Fe-S] cluster scaffold protein] + N(6)-[(R)-dihydrolipoyl]-L-lysyl-[protein] + 4 Fe(3+) + 2 hydrogen sulfide + 2 5'-deoxyadenosine + 2 L-methionine + 2 reduced [2Fe-2S]-[ferredoxin]. It participates in protein modification; protein lipoylation via endogenous pathway; protein N(6)-(lipoyl)lysine from octanoyl-[acyl-carrier-protein]: step 2/2. Catalyzes the radical-mediated insertion of two sulfur atoms into the C-6 and C-8 positions of the octanoyl moiety bound to the lipoyl domains of lipoate-dependent enzymes, thereby converting the octanoylated domains into lipoylated derivatives. The polypeptide is Lipoyl synthase, mitochondrial (Homo sapiens (Human)).